Here is a 265-residue protein sequence, read N- to C-terminus: Lipopolysaccharide core heptose(I) kinase WaaP (265 aa).

Residue Asp-162 is part of the active site.

This sequence belongs to the protein kinase superfamily. KdkA/RfaP family. Mg(2+) is required as a cofactor.

The catalysed reaction is an L-alpha-D-Hep-(1-&gt;3)-L-alpha-D-Hep-(1-&gt;5)-[alpha-Kdo-(2-&gt;4)]-alpha-Kdo-(2-&gt;6)-lipid A + ATP = an L-alpha-D-Hep-(1-&gt;3)-4-O-phospho-L-alpha-D-Hep-(1-&gt;5)-[alpha-Kdo-(2-&gt;4)]-alpha-Kdo-(2-&gt;6)-lipid A + ADP + H(+). It catalyses the reaction L-alpha-D-Hep-(1-&gt;3)-L-alpha-D-Hep-(1-&gt;5)-[alpha-Kdo-(2-&gt;4)]-alpha-Kdo-(2-&gt;6)-lipid A (E. coli) + ATP = L-alpha-D-Hep-(1-&gt;3)-4-O-phospho-L-alpha-D-Hep-(1-&gt;5)-[alpha-Kdo-(2-&gt;4)]-alpha-Kdo-(2-&gt;6)-lipid A (E. coli) + ADP + H(+). Its pathway is bacterial outer membrane biogenesis; LPS core biosynthesis. Kinase involved in the biosynthesis of the core oligosaccharide region of lipopolysaccharide (LPS). Catalyzes the phosphorylation of heptose I (HepI), the first heptose added to the Kdo2-lipid A module. This is Lipopolysaccharide core heptose(I) kinase WaaP from Escherichia coli (strain K12).